The following is a 494-amino-acid chain: uncharacterized protein (494 aa).

This is an uncharacterized protein from Acanthamoeba polyphaga (Amoeba).